A 492-amino-acid chain; its full sequence is Aerolysin-3 (492 aa).

An N-terminal signal peptide occupies residues M1–A23. Disulfide bonds link C42-C98 and C182-C187. Positions W68–Y84 are interaction with host N-linked glycan. Residues Y256–W288 form a part of the transmembrane beta-barrel after proteolytic activation of the toxin and insertion into the host membrane region. An interaction with glycans from host GPI-anchor region spans residues R346 to H355. The propeptide occupies A446–Q492.

Belongs to the aerolysin family. As to quaternary structure, homodimer in solution; homoheptamer in the host membrane. After binding to GPI-anchored proteins in target membranes and proteolytic removal of the C-terminal propeptide, the protein assembles into a heptameric pre-pore complex. A further conformation change leads to insertion into the host membrane. Proteolytic cleavage and subsequent release of the propeptide trigger a major conformation change, leading to the formation of a heptameric pre-pore that then inserts into the host membrane.

It is found in the secreted. It localises to the host cell membrane. Its function is as follows. Secreted, cytolytic toxin that forms pores in host membranes after proteolytic removal of a C-terminal propeptide, leading to destruction of the membrane permeability barrier and cell death. The pores are formed by transmembrane beta-strands and are approximately 3 nm in diameter. In Aeromonas hydrophila, this protein is Aerolysin-3 (ahh3).